Here is a 295-residue protein sequence, read N- to C-terminus: CRISPR-associated endonuclease Cas1 2 (295 aa).

Residues Glu-155, His-215, and Glu-230 each coordinate Mn(2+).

The protein belongs to the CRISPR-associated endonuclease Cas1 family. In terms of assembly, homodimer, forms a heterotetramer with a Cas2 homodimer. The cofactor is Mg(2+). Mn(2+) serves as cofactor.

Functionally, CRISPR (clustered regularly interspaced short palindromic repeat), is an adaptive immune system that provides protection against mobile genetic elements (viruses, transposable elements and conjugative plasmids). CRISPR clusters contain spacers, sequences complementary to antecedent mobile elements, and target invading nucleic acids. CRISPR clusters are transcribed and processed into CRISPR RNA (crRNA). Acts as a dsDNA endonuclease. Involved in the integration of spacer DNA into the CRISPR cassette. In Pyrobaculum aerophilum (strain ATCC 51768 / DSM 7523 / JCM 9630 / CIP 104966 / NBRC 100827 / IM2), this protein is CRISPR-associated endonuclease Cas1 2.